Here is a 338-residue protein sequence, read N- to C-terminus: Phenylalanine--tRNA ligase alpha subunit (338 aa).

Residue Glu-252 coordinates Mg(2+).

This sequence belongs to the class-II aminoacyl-tRNA synthetase family. Phe-tRNA synthetase alpha subunit type 1 subfamily. As to quaternary structure, tetramer of two alpha and two beta subunits. Mg(2+) serves as cofactor.

It localises to the cytoplasm. The catalysed reaction is tRNA(Phe) + L-phenylalanine + ATP = L-phenylalanyl-tRNA(Phe) + AMP + diphosphate + H(+). In Pseudomonas syringae pv. tomato (strain ATCC BAA-871 / DC3000), this protein is Phenylalanine--tRNA ligase alpha subunit.